The chain runs to 204 residues: Guanylate kinase (204 aa).

Positions 6-184 constitute a Guanylate kinase-like domain; it reads GLLIVLSGPA…AVDRIKAIVT (179 aa). 13–20 is an ATP binding site; the sequence is GPAGVGKG.

Belongs to the guanylate kinase family.

The protein resides in the cytoplasm. The enzyme catalyses GMP + ATP = GDP + ADP. In terms of biological role, essential for recycling GMP and indirectly, cGMP. This is Guanylate kinase (gmk) from Halalkalibacterium halodurans (strain ATCC BAA-125 / DSM 18197 / FERM 7344 / JCM 9153 / C-125) (Bacillus halodurans).